A 353-amino-acid polypeptide reads, in one-letter code: MYAALRKAFFLVPPERIHTWVFAGLRAATTAEPVRRRLARRLAPHDPILASTVFGTRFPGPLGLAAGFDKDGIGVHAWGALGFGYAEVGTVTAQAQPGNPAPRLFRLPADRALLNRMGFNNHGAGALAVQLTRTSSDVPIGVNIGKTKVTPPEHAAEDYAESARLLGPLAAYLVVNVSSPNTPGLRDLQSVESLRPILSAVLAETSTPVLVKIAPDLADQDIDEIADLAVELGLAGIVATNTTISRAGLATPGVDALGPGGISGPPVARRALEVLRRLYARVGDRLVLISVGGIETADDAWERIVSGASLLQGYTGFVYGGGLWAKDINDGLAARLRGHGFSGLAEAVGSAAR.

FMN is bound by residues 66–70 (AGFDK) and Thr90. Lys70 is a binding site for substrate. Substrate is bound at residue 115–119 (NRMGF). Positions 143 and 176 each coordinate FMN. Asn176 contacts substrate. Ser179 acts as the Nucleophile in catalysis. Asn181 lines the substrate pocket. FMN contacts are provided by Lys212 and Thr240. A substrate-binding site is contributed by 241-242 (NT). Residues Gly264, Gly293, and 314-315 (YT) each bind FMN.

Belongs to the dihydroorotate dehydrogenase family. Type 2 subfamily. Monomer. It depends on FMN as a cofactor.

Its subcellular location is the cell membrane. It carries out the reaction (S)-dihydroorotate + a quinone = orotate + a quinol. Its pathway is pyrimidine metabolism; UMP biosynthesis via de novo pathway; orotate from (S)-dihydroorotate (quinone route): step 1/1. In terms of biological role, catalyzes the conversion of dihydroorotate to orotate with quinone as electron acceptor. The sequence is that of Dihydroorotate dehydrogenase (quinone) from Mycolicibacterium vanbaalenii (strain DSM 7251 / JCM 13017 / BCRC 16820 / KCTC 9966 / NRRL B-24157 / PYR-1) (Mycobacterium vanbaalenii).